A 199-amino-acid chain; its full sequence is Transgelin-2 (199 aa).

A2 is subject to N-acetylalanine. A Phosphoserine modification is found at S11. 2 positions are modified to N6-acetyllysine: K17 and K20. One can recognise a Calponin-homology (CH) domain in the interval 24–136 (ADLEQILIQW…RTLMNLGGLA (113 aa)). S163 carries the phosphoserine modification. K171 participates in a covalent cross-link: Glycyl lysine isopeptide (Lys-Gly) (interchain with G-Cter in SUMO2). The Calponin-like repeat unit spans residues 174 to 199 (IGLQMGTNRGASQAGMTGYGMPRQIL). T180 is modified (phosphothreonine). An omega-N-methylarginine mark is found at R182 and R196.

The protein belongs to the calponin family. Expressed in epididymis (at protein level).

The protein is Transgelin-2 (TAGLN2) of Homo sapiens (Human).